The primary structure comprises 463 residues: MLYLILFLIAPIYAGLIFPTKPSSDPFYNPPKGFENAAVGDILQSRATPKSITGGFTPLKIQNSWQLLVRSEDSFGNPNVIVTTVIEPVNADPSKIASYQVFEDAAKADCAPSYALQFGSDLTTFVTQAEMYLMAPLLDQGYYVVSPDYEGPKSTFTIGKQSGQAVLNSIRAALKSGKITNIKDDAKVVMWGYSGGSLASGWAAALQPSYAPELGGNLLGAALGGFVTNITATAQATDGTVFAGIVANALGGVANEYPEFKSILQSDTDKKSVFDEFDGHCLIDGVLNYIGTSFLTGDHKIFKTGWDILKNPKIGKVVEDNGLVYQKQLVPKIPVFIYHGSIDQIVPIVDTKKTYQNWCDAGISSLEFAEDASNGHLTEAIMGAPAALTWIIDRFDGKQTVSGCQHIQRFSNLEYPNIPSSIANYFKAAMDVVLHLGLGPDVQKDQVSPEGIKKLGSIEMRWL.

The N-terminal stretch at Met-1–Ala-14 is a signal peptide. Cys-110 and Cys-281 form a disulfide bridge. Ser-194 (charge relay system) is an active-site residue. N-linked (GlcNAc...) asparagine glycosylation is present at Asn-229. Catalysis depends on charge relay system residues Asp-343 and His-376. A disulfide bond links Cys-359 and Cys-404.

The protein belongs to the AB hydrolase superfamily. Lipase family. Class Lip subfamily.

The protein resides in the secreted. The catalysed reaction is a triacylglycerol + H2O = a diacylglycerol + a fatty acid + H(+). With respect to regulation, fe(2)+, Fe(3+), Hg(2+) as well as ethylenediaminetetraacetic acid (EDTA) and phenylmethanesulfonyl fluoride (PMSF) strongly inhibit the lipase activity. Surfactants such as Tween 20, Tween 80 and TritonX-100 show also inhibitory effect in the lipase activity. Sodium dodecyl sulfate (SDS) sharply decreases the lipase activity by 85%. Methanol, ethanol, and acetone have also negative effect on the lipase activity, with residual activities at 48%, 24% and 44% respectively. Finally, lipase activity is almost lost in the presence of isopropanol alcohol. In terms of biological role, secreted lipase that is able to hydrolyze both the neutral triacylglycerols and the monopalmitate ester Tween 40, allowing the use of hydrolyzed products as carbon sources. Exhibits a preference for the short and medium chain length p-NP (C4 and C8 acyl group) esters rather than the long chain length p-NP esters (C12, C16 and C18 acyl group). Has broad lipolytic activity, which may be important for colonization and subsequent infection, therefore contributing to the persistence and virulence in human tissue. The sequence is that of Lipase 5 from Candida albicans (strain SC5314 / ATCC MYA-2876) (Yeast).